We begin with the raw amino-acid sequence, 915 residues long: Isoleucine--tRNA ligase (915 aa).

Positions Pro58–His68 match the 'HIGH' region motif. Glu568 is a binding site for L-isoleucyl-5'-AMP. Residues Lys609–Ser613 carry the 'KMSKS' region motif. Lys612 serves as a coordination point for ATP. Cys892, Cys895, Cys907, and Cys910 together coordinate Zn(2+).

This sequence belongs to the class-I aminoacyl-tRNA synthetase family. IleS type 1 subfamily. As to quaternary structure, monomer. Zn(2+) is required as a cofactor.

The protein localises to the cytoplasm. It carries out the reaction tRNA(Ile) + L-isoleucine + ATP = L-isoleucyl-tRNA(Ile) + AMP + diphosphate. Its function is as follows. Catalyzes the attachment of isoleucine to tRNA(Ile). As IleRS can inadvertently accommodate and process structurally similar amino acids such as valine, to avoid such errors it has two additional distinct tRNA(Ile)-dependent editing activities. One activity is designated as 'pretransfer' editing and involves the hydrolysis of activated Val-AMP. The other activity is designated 'posttransfer' editing and involves deacylation of mischarged Val-tRNA(Ile). The polypeptide is Isoleucine--tRNA ligase (Wolinella succinogenes (strain ATCC 29543 / DSM 1740 / CCUG 13145 / JCM 31913 / LMG 7466 / NCTC 11488 / FDC 602W) (Vibrio succinogenes)).